The following is a 205-amino-acid chain: uncharacterized protein (205 aa).

Positions 10 to 75 (QDLLSAVDQQ…AANLMTVMTD (66 aa)) form a coiled coil. Residues 111-138 (PLSNTNNEQTSPPASGKTSETPKKNPTN) form a disordered region. Polar residues predominate over residues 112–138 (LSNTNNEQTSPPASGKTSETPKKNPTN).

It belongs to the asfivirus K205R family.

The protein localises to the host cytoplasm. Its function is as follows. Induces host endoplasmic reticulum stress and consequently activates autophagy and NF-kappa-B signaling pathway. In turn, may induce autophagy-mediated STING1 degradation and innate immune evasion. This is an uncharacterized protein from Ornithodoros (relapsing fever ticks).